The following is a 498-amino-acid chain: 4-aminobutyrate aminotransferase (498 aa).

164 to 165 contacts pyridoxal 5'-phosphate; sequence GS. Arg222 is a substrate binding site. Position 356 is an N6-(pyridoxal phosphate)lysine (Lys356). Thr381 contacts pyridoxal 5'-phosphate.

The protein belongs to the class-III pyridoxal-phosphate-dependent aminotransferase family. Homodimer. Pyridoxal 5'-phosphate is required as a cofactor.

The protein resides in the cytoplasm. It catalyses the reaction 4-aminobutanoate + 2-oxoglutarate = succinate semialdehyde + L-glutamate. Its function is as follows. Deaminates gamma-aminobutyric acid (GABA) to succinate-semialdehyde, which in turn is converted to succinate by the succinate semialdehyde dehydrogenase. Required for the degradation of GABA, which is important for utilization of GABA as nitrogen source. In Emericella nidulans (strain FGSC A4 / ATCC 38163 / CBS 112.46 / NRRL 194 / M139) (Aspergillus nidulans), this protein is 4-aminobutyrate aminotransferase (gatA).